Reading from the N-terminus, the 948-residue chain is Phosphoenolpyruvate carboxylase (948 aa).

Active-site residues include His138 and Lys610.

This sequence belongs to the PEPCase type 1 family. Mg(2+) is required as a cofactor.

It catalyses the reaction oxaloacetate + phosphate = phosphoenolpyruvate + hydrogencarbonate. Its function is as follows. Forms oxaloacetate, a four-carbon dicarboxylic acid source for the tricarboxylic acid cycle. The chain is Phosphoenolpyruvate carboxylase from Streptococcus sanguinis (strain SK36).